The sequence spans 61 residues: Large ribosomal subunit protein uL29 (61 aa).

Belongs to the universal ribosomal protein uL29 family.

The protein is Large ribosomal subunit protein uL29 of Campylobacter curvus (strain 525.92).